The following is a 164-amino-acid chain: MEEYEFLVRVREAGGFDIEHLMDTKPSSCVIGCREFDNNDDYNAHIVLFARMGIHKYNMIQGTNLQLSCVEKYNYRSPRVYSAFYITLIAKDPDACNSLVTFQTRVVEEGFNMTKLSCNIARPKPGPQENAALPRHSVDLEPVDVFYKGSLPEWPPEDAFNDNI.

This is an uncharacterized protein from Arabidopsis thaliana (Mouse-ear cress).